The primary structure comprises 60 residues: Large ribosomal subunit protein uL30 (60 aa).

The protein belongs to the universal ribosomal protein uL30 family. In terms of assembly, part of the 50S ribosomal subunit.

This Christiangramia forsetii (strain DSM 17595 / CGMCC 1.15422 / KT0803) (Gramella forsetii) protein is Large ribosomal subunit protein uL30.